Here is a 164-residue protein sequence, read N- to C-terminus: MPELLKERVETCYQQAETFFKRPFPRPEVSFKLRGQKAGVAHLHENLLRFNLQLYRENQEDFLRQTVAHEVAHLVAHQLFGDSIQAHGEEWQLIMRGVYELPPNRCHNYEVQRRATTRYIYRCPCPQGDFPFTAQRHKLVRQGRRYLCKRCRAILVYSGETRVE.

The SprT-like domain maps to 14–156 (QQAETFFKRP…LCKRCRAILV (143 aa)). Residue His69 participates in Zn(2+) binding. Glu70 is a catalytic residue. His73 is a Zn(2+) binding site.

It belongs to the SprT family. The cofactor is Zn(2+).

It localises to the cytoplasm. The sequence is that of Protein SprT from Pseudomonas putida (strain GB-1).